The sequence spans 320 residues: HPr kinase/phosphorylase (320 aa).

Residues H141 and K162 contribute to the active site. An ATP-binding site is contributed by 156 to 163 (GHSGLGKS). S163 serves as a coordination point for Mg(2+). D180 (proton acceptor; for phosphorylation activity. Proton donor; for dephosphorylation activity) is an active-site residue. Positions 204-213 (LEVRGLGILN) are important for the catalytic mechanism of both phosphorylation and dephosphorylation. E205 is a Mg(2+) binding site. The active site involves R248. Residues 269–274 (PVAVGR) are important for the catalytic mechanism of dephosphorylation.

Belongs to the HPrK/P family. As to quaternary structure, homohexamer. Mg(2+) is required as a cofactor.

The enzyme catalyses [HPr protein]-L-serine + ATP = [HPr protein]-O-phospho-L-serine + ADP + H(+). It catalyses the reaction [HPr protein]-O-phospho-L-serine + phosphate + H(+) = [HPr protein]-L-serine + diphosphate. Its function is as follows. Catalyzes the ATP- as well as the pyrophosphate-dependent phosphorylation of a specific serine residue in HPr, a phosphocarrier protein of the phosphoenolpyruvate-dependent sugar phosphotransferase system (PTS). HprK/P also catalyzes the pyrophosphate-producing, inorganic phosphate-dependent dephosphorylation (phosphorolysis) of seryl-phosphorylated HPr (P-Ser-HPr). This chain is HPr kinase/phosphorylase, found in Neisseria meningitidis serogroup C / serotype 2a (strain ATCC 700532 / DSM 15464 / FAM18).